The chain runs to 197 residues: Nascent polypeptide-associated complex subunit alpha (197 aa).

Residues 1–20 are compositionally biased toward acidic residues; that stretch reads MAEPVEDSVDEISSEGDSDV. Disordered regions lie at residues 1-46 and 120-154; these read MAEP…RKLL and GADR…SKAD. The region spanning 36 to 101 is the NAC-A/B domain; the sequence is DKNERKSRKL…AKVEDMSQNS (66 aa). Residues 134 to 154 are compositionally biased toward basic and acidic residues; the sequence is SGHDHAHDHDHSHGDCASKAD. The UBA domain maps to 158 to 195; the sequence is VNQSDIDLVVSQVGCTREQAVEALIKNKGDIVETIMQL.

The protein belongs to the NAC-alpha family.

Functionally, may promote appropriate targeting of ribosome-nascent polypeptide complexes. The protein is Nascent polypeptide-associated complex subunit alpha of Babesia divergens.